The primary structure comprises 287 residues: Nucleotide-binding protein mma_3120 (287 aa).

8–15 (GISGSGKS) contributes to the ATP binding site. 57 to 60 (DARS) lines the GTP pocket.

The protein belongs to the RapZ-like family.

In terms of biological role, displays ATPase and GTPase activities. This Janthinobacterium sp. (strain Marseille) (Minibacterium massiliensis) protein is Nucleotide-binding protein mma_3120.